An 801-amino-acid polypeptide reads, in one-letter code: Ferredoxin:CoB-CoM heterodisulfide reductase subunit A (801 aa).

149 to 172 (GGGIAGITAALNLADNGVSTVLVE) lines the FAD pocket. 4Fe-4S ferredoxin-type domains follow at residues 239-269 (KKPR…FNCG) and 285-320 (PKIY…FSQK). The [4Fe-4S] cluster site is built by Cys248, Cys251, Cys254, Cys258, Cys295, Cys303, Cys306, and Cys310. The segment at 382 to 409 (FSKASSDPTPATCDSRCEDSSDESQGTD) is disordered. 2 4Fe-4S ferredoxin-type domains span residues 606 to 634 (EIAT…VNES) and 635 to 664 (GRVV…IAGF). [4Fe-4S] cluster contacts are provided by Cys615, Cys618, Cys621, Cys624, Cys644, Cys647, Cys650, and Cys654.

It belongs to the HdrA family. As to quaternary structure, the ferredoxin:CoB-CoM heterodisulfide reductase is composed of three subunits; HdrA1, HdrB1 and HdrC1. It depends on [4Fe-4S] cluster as a cofactor. FAD is required as a cofactor.

It localises to the cytoplasm. It carries out the reaction coenzyme B + coenzyme M + 2 oxidized [2Fe-2S]-[ferredoxin] = coenzyme M-coenzyme B heterodisulfide + 2 reduced [2Fe-2S]-[ferredoxin] + 2 H(+). It functions in the pathway cofactor metabolism; coenzyme M-coenzyme B heterodisulfide reduction; coenzyme B and coenzyme M from coenzyme M-coenzyme B heterodisulfide: step 1/1. Its function is as follows. Part of a complex that catalyzes the reversible reduction of CoM-S-S-CoB to the thiol-coenzymes H-S-CoM (coenzyme M) and H-S-CoB (coenzyme B). Probably involved in methylotrophic methanogenesis but not in aceticlastic methanogenesis. In Methanosarcina acetivorans (strain ATCC 35395 / DSM 2834 / JCM 12185 / C2A), this protein is Ferredoxin:CoB-CoM heterodisulfide reductase subunit A.